Consider the following 383-residue polypeptide: Protein arginine N-methyltransferase PRMT10 (383 aa).

The interval 1-23 (MRSSQNGGAMGGRAAGTGGGGPS) is disordered. The span at 8–22 (GAMGGRAAGTGGGGP) shows a compositional bias: gly residues. The SAM-dependent MTase PRMT-type domain maps to 29 to 360 (EVDYAQYFCT…KENHRLMEIE (332 aa)). Residues Gln-45, Arg-54, Gly-78, Glu-100, and Glu-129 each contribute to the S-adenosyl-L-methionine site. Catalysis depends on residues Glu-143 and Glu-152. The dimerization arm stretch occupies residues 190–230 (DRKRNDFDGAMADWHNFSDEIKSYYGVDMGVLTKPFAEEQE).

It belongs to the class I-like SAM-binding methyltransferase superfamily. Protein arginine N-methyltransferase family. Ring-like homodimer.

The catalysed reaction is L-arginyl-[protein] + 2 S-adenosyl-L-methionine = N(omega),N(omega)-dimethyl-L-arginyl-[protein] + 2 S-adenosyl-L-homocysteine + 2 H(+). Its function is as follows. Methylates (mono and asymmetric dimethylation) the guanidino nitrogens of arginyl residues in some proteins. Essential for regulating flowering time. This Arabidopsis thaliana (Mouse-ear cress) protein is Protein arginine N-methyltransferase PRMT10 (PRMT10).